The sequence spans 116 residues: Iron-sulfur cluster insertion protein ErpA (116 aa).

Iron-sulfur cluster is bound by residues C44, C108, and C110.

Belongs to the HesB/IscA family. Homodimer. The cofactor is iron-sulfur cluster.

Required for insertion of 4Fe-4S clusters for at least IspG. This is Iron-sulfur cluster insertion protein ErpA from Shewanella halifaxensis (strain HAW-EB4).